The chain runs to 328 residues: Endochitinase (328 aa).

A signal peptide spans 1 to 26 (MRRHKEVNFVAYLLFSLLVLVSAALA). The Chitin-binding type-1 domain maps to 27–68 (QNCGSQGGGKACASGQCCSKFGWCGNTNDYCGSGNCQSQCPG). 7 disulfides stabilise this stretch: Cys29–Cys44, Cys38–Cys50, Cys43–Cys57, Cys62–Cys66, Cys100–Cys162, Cys174–Cys182, and Cys281–Cys313. Glu144 acts as the Proton donor in catalysis. The propeptide at 322-328 (ALLVDTL) is removed in mature form.

This sequence belongs to the glycosyl hydrolase 19 family. Chitinase class I subfamily.

It is found in the vacuole. The enzyme catalyses Random endo-hydrolysis of N-acetyl-beta-D-glucosaminide (1-&gt;4)-beta-linkages in chitin and chitodextrins.. Its function is as follows. Defense against chitin-containing fungal pathogens. This Solanum tuberosum (Potato) protein is Endochitinase.